We begin with the raw amino-acid sequence, 124 residues long: MALSKDDILNAIAEMSVMDVVALVEAMEEKFGVSAAAAVAVAAAPAADAAAVEEKTEFDVVLQSAGEKKVNVIKVVRGITGLGLKEAKDLVDGAPSTVKEALSKDDAEKAKKELEEAGATVELK.

Residues 101 to 115 (ALSKDDAEKAKKELE) are compositionally biased toward basic and acidic residues. A disordered region spans residues 101-124 (ALSKDDAEKAKKELEEAGATVELK).

This sequence belongs to the bacterial ribosomal protein bL12 family. As to quaternary structure, homodimer. Part of the ribosomal stalk of the 50S ribosomal subunit. Forms a multimeric L10(L12)X complex, where L10 forms an elongated spine to which 2 to 4 L12 dimers bind in a sequential fashion. Binds GTP-bound translation factors.

Functionally, forms part of the ribosomal stalk which helps the ribosome interact with GTP-bound translation factors. Is thus essential for accurate translation. This is Large ribosomal subunit protein bL12 from Hahella chejuensis (strain KCTC 2396).